The chain runs to 77 residues: Acyl carrier protein (77 aa).

In terms of domain architecture, Carrier spans 2–77 (STIEERVKKI…EAIDYVVSHQ (76 aa)). Ser37 carries the post-translational modification O-(pantetheine 4'-phosphoryl)serine.

This sequence belongs to the acyl carrier protein (ACP) family. Post-translationally, 4'-phosphopantetheine is transferred from CoA to a specific serine of apo-ACP by AcpS. This modification is essential for activity because fatty acids are bound in thioester linkage to the sulfhydryl of the prosthetic group.

It localises to the cytoplasm. It functions in the pathway lipid metabolism; fatty acid biosynthesis. Its function is as follows. Carrier of the growing fatty acid chain in fatty acid biosynthesis. The chain is Acyl carrier protein from Oceanospirillum linum.